The primary structure comprises 442 residues: MPRDRRKFYIHTFGCQMNQADSGIIAALLEQDGYQQASSEEEAGIIMLNTCAVRENAVERIAHYLQHVKGFKRKCPELLVGLTGCIPQYRREELFTVFPVIDFLAGPDTYRVLPVLIAEAGKGRAARLDFNPFETYDGVTQARTQSLTAFVPIMRGCNNMCAFCVVPFTRGRERSHPFGSVLDEVRALAESGCREITLLGQNVNSYHDSQSGADFSRLLDAVSREAPETRIRFTTSHPKDMSHSLVETMASRPNICNHLHLPVQSGSTRMLARMNRGHDIEDYRNKIELLRERIPGISLSTDLIAGFCGESDADHCQTLELMREVRFDSAFMFYYSVRPGTLAARTMPDDVPEEVKKQRLQEIIDLQNGISAELLRLAIGSVVEVLVESESRRSSDQLMGRTGGNRVVVFDRGIHQPGDMVRVMITGSTSATLIGRAAENQH.

Positions 6–122 (RKFYIHTFGC…LPVLIAEAGK (117 aa)) constitute an MTTase N-terminal domain. Cys-15, Cys-51, Cys-85, Cys-157, Cys-161, and Cys-164 together coordinate [4Fe-4S] cluster. The Radical SAM core domain occupies 143–373 (RTQSLTAFVP…IDLQNGISAE (231 aa)). A TRAM domain is found at 376–439 (RLAIGSVVEV…SATLIGRAAE (64 aa)).

The protein belongs to the methylthiotransferase family. MiaB subfamily. As to quaternary structure, monomer. [4Fe-4S] cluster is required as a cofactor.

It localises to the cytoplasm. It carries out the reaction N(6)-dimethylallyladenosine(37) in tRNA + (sulfur carrier)-SH + AH2 + 2 S-adenosyl-L-methionine = 2-methylsulfanyl-N(6)-dimethylallyladenosine(37) in tRNA + (sulfur carrier)-H + 5'-deoxyadenosine + L-methionine + A + S-adenosyl-L-homocysteine + 2 H(+). Functionally, catalyzes the methylthiolation of N6-(dimethylallyl)adenosine (i(6)A), leading to the formation of 2-methylthio-N6-(dimethylallyl)adenosine (ms(2)i(6)A) at position 37 in tRNAs that read codons beginning with uridine. This Chlorobium limicola (strain DSM 245 / NBRC 103803 / 6330) protein is tRNA-2-methylthio-N(6)-dimethylallyladenosine synthase.